Here is a 363-residue protein sequence, read N- to C-terminus: 3-dehydroquinate synthase (363 aa).

NAD(+) contacts are provided by residues Ser72–Lys77, Gly106–Asp110, Thr130–Thr131, Lys142, and Lys151. The Zn(2+) site is built by Glu184, His246, and His263.

This sequence belongs to the sugar phosphate cyclases superfamily. Dehydroquinate synthase family. Co(2+) is required as a cofactor. Zn(2+) serves as cofactor. It depends on NAD(+) as a cofactor.

It localises to the cytoplasm. The catalysed reaction is 7-phospho-2-dehydro-3-deoxy-D-arabino-heptonate = 3-dehydroquinate + phosphate. The protein operates within metabolic intermediate biosynthesis; chorismate biosynthesis; chorismate from D-erythrose 4-phosphate and phosphoenolpyruvate: step 2/7. In terms of biological role, catalyzes the conversion of 3-deoxy-D-arabino-heptulosonate 7-phosphate (DAHP) to dehydroquinate (DHQ). The chain is 3-dehydroquinate synthase from Bacillus pumilus (strain SAFR-032).